Consider the following 219-residue polypeptide: Leukocyte surface antigen CD53 (219 aa).

The Cytoplasmic segment spans residues methionine 1 to tyrosine 11. Residues valine 12–isoleucine 32 form a helical membrane-spanning segment. Topologically, residues tyrosine 33–asparagine 54 are extracellular. A helical membrane pass occupies residues isoleucine 55 to leucine 69. Over glycine 70 to cysteine 80 the chain is Cytoplasmic. The helical transmembrane segment at leucine 81–tyrosine 106 threads the bilayer. The Extracellular segment spans residues glutamate 107–asparagine 181. N-linked (GlcNAc...) asparagine glycans are attached at residues asparagine 119, asparagine 129, and asparagine 148. The helical transmembrane segment at phenylalanine 182–leucine 206 threads the bilayer. Residues asparagine 207–leucine 219 lie on the Cytoplasmic side of the membrane.

Belongs to the tetraspanin (TM4SF) family. As to quaternary structure, interacts with SCIMP. Interacts with CD45/PTPRC. Interacts with IL7R. Interacts with RBL2 and PPP2CA.

Its subcellular location is the cell membrane. The protein resides in the cell junction. It localises to the membrane. In terms of biological role, structural component of specialized membrane microdomains known as tetraspanin-enriched microdomains (TERMs), which act as platforms for receptor clustering and signaling. Participates thereby in diverse biological functions such as cell signal transduction, adhesion, migration and protein trafficking. Plays a role in the activation of monocytes and B-cells. Acts as an essential regulator of B-cell development by promoting interleukin-7 receptor/IL7R signaling. Also promotes, in B-cells, the BCR signaling by recruiting PKC to the plasma membrane in order to phosphorylate its substrates. Plays an essential role in lymphocyte homing to lymph nodes by stabilizing L-selectin/SELL cell surface expression. Also mediates metabolic and inflammatory functions in hepatocytes and adipose tissue by promoting TNF-alpha and LPS signaling independent of the immune compartment. Protects hematopoietic stem cell function in response to stress by facilitating DREAM complex activity through association with p130/RBL2 and its phosphatase PP2A. The polypeptide is Leukocyte surface antigen CD53 (Cd53) (Mus musculus (Mouse)).